A 336-amino-acid chain; its full sequence is Phospho-N-acetylmuramoyl-pentapeptide-transferase (336 aa).

Helical transmembrane passes span 3–23 (LTLI…PYFI), 53–73 (GGTV…LFSI), 78–98 (SLAL…IGFL), 118–138 (LALQ…PSGI), 143–163 (VFGY…FWVV), 174–194 (GIDG…GVIA), 200–220 (FDVL…FCFN), 226–246 (VFMG…ISIA), 251–271 (WTLL…MLQV), and 316–336 (AFLW…LYVF).

The protein belongs to the glycosyltransferase 4 family. MraY subfamily. It depends on Mg(2+) as a cofactor.

Its subcellular location is the cell membrane. The catalysed reaction is UDP-N-acetyl-alpha-D-muramoyl-L-alanyl-gamma-D-glutamyl-L-lysyl-D-alanyl-D-alanine + di-trans,octa-cis-undecaprenyl phosphate = Mur2Ac(oyl-L-Ala-gamma-D-Glu-L-Lys-D-Ala-D-Ala)-di-trans,octa-cis-undecaprenyl diphosphate + UMP. It functions in the pathway cell wall biogenesis; peptidoglycan biosynthesis. Functionally, catalyzes the initial step of the lipid cycle reactions in the biosynthesis of the cell wall peptidoglycan: transfers peptidoglycan precursor phospho-MurNAc-pentapeptide from UDP-MurNAc-pentapeptide onto the lipid carrier undecaprenyl phosphate, yielding undecaprenyl-pyrophosphoryl-MurNAc-pentapeptide, known as lipid I. The polypeptide is Phospho-N-acetylmuramoyl-pentapeptide-transferase (Streptococcus pyogenes serotype M1).